We begin with the raw amino-acid sequence, 404 residues long: uncharacterized protein (404 aa).

This is an uncharacterized protein from Ostreid herpesvirus 1 (isolate France) (OsHV-1).